A 185-amino-acid polypeptide reads, in one-letter code: Elongation factor P (185 aa).

The protein belongs to the elongation factor P family.

It localises to the cytoplasm. Its pathway is protein biosynthesis; polypeptide chain elongation. Its function is as follows. Involved in peptide bond synthesis. Stimulates efficient translation and peptide-bond synthesis on native or reconstituted 70S ribosomes in vitro. Probably functions indirectly by altering the affinity of the ribosome for aminoacyl-tRNA, thus increasing their reactivity as acceptors for peptidyl transferase. The sequence is that of Elongation factor P from Deinococcus geothermalis (strain DSM 11300 / CIP 105573 / AG-3a).